A 434-amino-acid chain; its full sequence is APETALA2-like protein 2 (434 aa).

Positions Met-1 to Ser-116 are disordered. The segment covering Arg-12–Ser-23 has biased composition (low complexity). Residues Asp-25–Leu-38 are compositionally biased toward gly residues. The segment covering Leu-72 to Gln-87 has biased composition (pro residues). The span at Val-104–Arg-113 shows a compositional bias: basic residues. A Nuclear localization signal motif is present at residues Lys-106–Arg-115. 2 DNA-binding regions (AP2/ERF) span residues Gln-118 to Asn-174 and Lys-210 to Glu-267. The EAR signature appears at Leu-291–Ile-295.

This sequence belongs to the AP2/ERF transcription factor family. AP2 subfamily. In terms of assembly, may form homodimer. Interacts with TPR2/ASP1.

Its subcellular location is the nucleus. In terms of biological role, probable transcription factor. Involved in spikelet transition. Together with SNB, controls synergistically inflorescence architecture and floral meristem establishment via the regulation of spatio-temporal expression of B- and E-function floral organ identity genes in the lodicules and of spikelet meristem genes. Prevents lemma and palea elongation as well as grain growth. This Oryza sativa subsp. indica (Rice) protein is APETALA2-like protein 2.